Consider the following 523-residue polypeptide: Sodium-dependent lysophosphatidylcholine symporter 1-B (523 aa).

The Cytoplasmic segment spans residues 1-34; that stretch reads MAKGEGAEQYTNTSLLQKPSPDEVKLAKHETKSR. The chain crosses the membrane as a helical span at residues 35–64; the sequence is LSVCSKLCYAIGGAPYQITGCAIGFFLQIY. Over 65 to 75 the chain is Extracellular; the sequence is LLDVALLDPFY. Residues 76–96 traverse the membrane as a helical segment; the sequence is ASIILFVGRAWDAVTDPTVGF. At 97–108 the chain is on the cytoplasmic side; sequence LVSRTPWTRFGR. A helical transmembrane segment spans residues 109–128; it reads MMPWIVLSTPFAVLCYFLIW. At 129–138 the chain is on the extracellular side; the sequence is YVPSVDQGKV. A helical membrane pass occupies residues 139–163; that stretch reads VWYLIFYCCFQTLQTCFHVPYSALT. Topologically, residues 164 to 170 are cytoplasmic; the sequence is MFISTEQ. The chain crosses the membrane as a helical span at residues 171–202; that stretch reads KERDSATAYRMTVEVLGTLIGTAIQGQIVGMA. Over 203-226 the chain is Extracellular; the sequence is NAPCISTEIDLNSTGLEVAPDVNI. A disulfide bridge connects residues C206 and C457. N-linked (GlcNAc...) asparagine glycosylation is found at N214 and N225. The helical transmembrane segment at 227 to 260 threads the bilayer; that stretch reads TDPHVSLQDLRNAYMIASGVICAIYVVCAVVLFL. The Cytoplasmic segment spans residues 261–290; sequence GVKEQKDTCRVRTEPMSFFQGICMVMGHGP. Residues 291–317 form a helical membrane-spanning segment; sequence YAKLVMGFLFTSLAFMLLEGNFALFCI. The Extracellular portion of the chain corresponds to 318-328; that stretch reads YNLGFRNDFQN. Residues 329–347 form a helical membrane-spanning segment; it reads VLLVIMLSATLAIPFWQWF. The Cytoplasmic portion of the chain corresponds to 348 to 351; the sequence is LTKF. Residues 352 to 373 form a helical membrane-spanning segment; the sequence is GKKTAVYIGTTSVVPFLISVVL. At 374 to 376 the chain is on the extracellular side; that stretch reads VPS. Residues 377-413 traverse the membrane as a helical segment; it reads SLAVTYIASFAAGVSVAAAFLLPWSMLPDVVDDFKVQ. Residues 414–423 are Cytoplasmic-facing; it reads NPESQGHEAI. The chain crosses the membrane as a helical span at residues 424–450; it reads FYSFYVFFTKFASGVSLGVSTLSLDFA. Residues 451–462 lie on the Extracellular side of the membrane; it reads GYVTRGCTQPGE. Residues 463 to 486 traverse the membrane as a helical segment; it reads VKLTLKILVSAAPIVLIIIGLLIF. Residues 487–523 are Cytoplasmic-facing; sequence ISYPINEEKRQGNRKLLNEQRENEMDSETDSTELNVV. The disordered stretch occupies residues 504–523; that stretch reads NEQRENEMDSETDSTELNVV.

The protein belongs to the major facilitator superfamily. In terms of tissue distribution, expressed in the developing nervous system.

The protein resides in the cell membrane. It localises to the endoplasmic reticulum membrane. The enzyme catalyses a 1-acyl-sn-glycero-3-phosphocholine(in) + Na(+)(in) = a 1-acyl-sn-glycero-3-phosphocholine(out) + Na(+)(out). It carries out the reaction 1-(4Z,7Z,10Z,13Z,16Z,19Z-docosahexaenoyl)-sn-glycero-3-phosphocholine(in) + Na(+)(in) = 1-(4Z,7Z,10Z,13Z,16Z,19Z-docosahexaenoyl)-sn-glycero-3-phosphocholine(out) + Na(+)(out). It catalyses the reaction 1-(9Z-octadecenoyl)-sn-glycero-3-phosphocholine(in) + Na(+)(in) = 1-(9Z-octadecenoyl)-sn-glycero-3-phosphocholine(out) + Na(+)(out). The catalysed reaction is 1-hexadecanoyl-sn-glycero-3-phosphocholine(in) + Na(+)(in) = 1-hexadecanoyl-sn-glycero-3-phosphocholine(out) + Na(+)(out). The enzyme catalyses a 1-acyl-sn-glycero-3-phosphoethanolamine(in) + Na(+)(in) = a 1-acyl-sn-glycero-3-phosphoethanolamine(out) + Na(+)(out). In terms of biological role, sodium-dependent lysophosphatidylcholine (LPC) symporter, which plays an essential role for blood-brain barrier formation and function. Specifically expressed in endothelium of the blood-brain barrier of micro-vessels and transports LPC into the brain. Transport of LPC is essential because it constitutes the major mechanism by which docosahexaenoic acid (DHA), an omega-3 fatty acid that is essential for normal brain growth and cognitive function, enters the brain. Transports LPC carrying long-chain fatty acids such LPC oleate and LPC palmitate with a minimum acyl chain length of 14 carbons. Does not transport docosahexaenoic acid in unesterified fatty acid. In Danio rerio (Zebrafish), this protein is Sodium-dependent lysophosphatidylcholine symporter 1-B (mfsd2ab).